The following is a 173-amino-acid chain: Alpha-crystallin A chain (173 aa).

The residue at position 1 (Met1) is an N-acetylmethionine. Residues 1–63 (MDIAIQHPWF…RTVLDSGISE (63 aa)) are required for complex formation with BFSP1 and BFSP2. At Gln6 the chain carries Deamidated glutamine; partial. Ser45 is modified (phosphoserine). Position 50 is a deamidated glutamine; partial (Gln50). Positions 52-162 (LFRTVLDSGI…GHSERAIPVS (111 aa)) constitute a sHSP domain. Residue Lys70 is modified to N6-acetyllysine. Gln90 is subject to Deamidated glutamine; partial. Lys99 carries the N6-acetyllysine modification. Position 100 (His100) interacts with Zn(2+). Position 101 is a deamidated asparagine; partial (Asn101). Zn(2+) is bound by residues Glu102 and His107. At Ser122 the chain carries Phosphoserine. Residue Asn123 is modified to Deamidated asparagine; partial. A disordered region spans residues 144-173 (PKIPSGVDAGHSERAIPVSREEKPSSAPSS). Residues 153–167 (GHSERAIPVSREEKP) are compositionally biased toward basic and acidic residues. Residue His154 participates in Zn(2+) binding. Ser162 carries an O-linked (GlcNAc) serine glycan.

This sequence belongs to the small heat shock protein (HSP20) family. In terms of assembly, heteromer composed of three CRYAA and one CRYAB subunits. Inter-subunit bridging via zinc ions enhances stability, which is crucial as there is no protein turn over in the lens. Can also form homodimers and homotetramers (dimers of dimers) which serve as the building blocks of homooligomers. Within homooligomers, the zinc-binding motif is created from residues of 3 different molecules. His-100 and Glu-102 from one molecule are ligands of the zinc ion, and His-107 and His-154 residues from additional molecules complete the site with tetrahedral coordination geometry. Part of a complex required for lens intermediate filament formation composed of BFSP1, BFSP2 and CRYAA. Acetylation at Lys-70 may increase chaperone activity. Post-translationally, undergoes age-dependent proteolytical cleavage at the C-terminus.

It is found in the cytoplasm. Its subcellular location is the nucleus. Functionally, contributes to the transparency and refractive index of the lens. Acts as a chaperone, preventing aggregation of various proteins under a wide range of stress conditions. Required for the correct formation of lens intermediate filaments as part of a complex composed of BFSP1, BFSP2 and CRYAA. This is Alpha-crystallin A chain (CRYAA) from Giraffa camelopardalis (Giraffe).